The chain runs to 219 residues: 7-cyano-7-deazaguanine synthase (219 aa).

Position 10–20 (10–20 (FSGGQDSTTCL)) interacts with ATP. Residues C188, C196, C199, and C202 each contribute to the Zn(2+) site.

Belongs to the QueC family. It depends on Zn(2+) as a cofactor.

The enzyme catalyses 7-carboxy-7-deazaguanine + NH4(+) + ATP = 7-cyano-7-deazaguanine + ADP + phosphate + H2O + H(+). The protein operates within purine metabolism; 7-cyano-7-deazaguanine biosynthesis. Its function is as follows. Catalyzes the ATP-dependent conversion of 7-carboxy-7-deazaguanine (CDG) to 7-cyano-7-deazaguanine (preQ(0)). In Neisseria gonorrhoeae (strain NCCP11945), this protein is 7-cyano-7-deazaguanine synthase.